The primary structure comprises 308 residues: D-alanine--D-alanine ligase (308 aa).

The region spanning 109–302 (KAAYAAAGLP…FGALCRWIVE (194 aa)) is the ATP-grasp domain. 136-186 (MPPPYVIKPYNEGSSVGVYLVPEGAEAAPELADDLPDTLMVEAFVPGRELT) lines the ATP pocket. 3 residues coordinate Mg(2+): aspartate 253, glutamate 269, and asparagine 271.

This sequence belongs to the D-alanine--D-alanine ligase family. The cofactor is Mg(2+). It depends on Mn(2+) as a cofactor.

The protein resides in the cytoplasm. The catalysed reaction is 2 D-alanine + ATP = D-alanyl-D-alanine + ADP + phosphate + H(+). The protein operates within cell wall biogenesis; peptidoglycan biosynthesis. Functionally, cell wall formation. The protein is D-alanine--D-alanine ligase of Dinoroseobacter shibae (strain DSM 16493 / NCIMB 14021 / DFL 12).